An 86-amino-acid chain; its full sequence is Putative membrane protein insertion efficiency factor (86 aa).

Belongs to the UPF0161 family.

The protein localises to the cell inner membrane. Could be involved in insertion of integral membrane proteins into the membrane. The polypeptide is Putative membrane protein insertion efficiency factor (Pseudomonas aeruginosa (strain LESB58)).